A 463-amino-acid chain; its full sequence is Increased DNA methylation 3 (463 aa).

Over residues 169–182 the composition is skewed to basic and acidic residues; it reads NLDESRETEQDCSR. Disordered stretches follow at residues 169-199 and 300-347; these read NLDE…DYNS and RRFK…TTGT. Residues 184–199 are compositionally biased toward polar residues; the sequence is GDATANGVVTNEDYNS. The span at 300–310 shows a compositional bias: basic residues; that stretch reads RRFKNSSKKAT.

In terms of assembly, interacts with MBD7 (via C-terminus), IDM1 and IDM2. Part of a complex made of MBD7, IDM1, IDM2 and IDM3.

The protein localises to the nucleus. Functionally, acts as an anti-silencing factor that prevents DNA hypermethylation and gene repression. This Arabidopsis thaliana (Mouse-ear cress) protein is Increased DNA methylation 3.